The sequence spans 247 residues: TM2 domain-containing protein 3 (247 aa).

The N-terminal stretch at 1 to 29 (MAGGVLPLRGLRALCRVLLFLSQFCILSG) is a signal peptide. The Extracellular segment spans residues 30 to 179 (GEQSQALAQS…RTFPKMLYCN (150 aa)). N-linked (GlcNAc...) asparagine glycosylation is found at Asn-87, Asn-122, Asn-140, Asn-157, Asn-169, and Asn-179. A helical membrane pass occupies residues 180–200 (WTGGYKWSTALALSITLGGFG). Residues 183-230 (GYKWSTALALSITLGGFGADRFYLGQWREGLGKLFSFGGLGIWTLIDV) enclose the TM2 domain. The Cytoplasmic portion of the chain corresponds to 201–215 (ADRFYLGQWREGLGK). A helical transmembrane segment spans residues 216–236 (LFSFGGLGIWTLIDVLLIGVG). Over 237 to 247 (YVGPADGSLYI) the chain is Extracellular.

The protein belongs to the TM2 family. Widely expressed.

The protein localises to the membrane. In terms of biological role, probable positive regulator of Notch signaling. The polypeptide is TM2 domain-containing protein 3 (TM2D3) (Homo sapiens (Human)).